A 198-amino-acid polypeptide reads, in one-letter code: GTP cyclohydrolase-2 (198 aa).

GTP is bound at residue 52 to 56 (RMHSE). Residues Cys-57, Cys-68, and Cys-70 each coordinate Zn(2+). Residues Gln-73, 94–96 (EGR), and Thr-116 contribute to the GTP site. The active-site Proton acceptor is the Asp-128. The active-site Nucleophile is the Arg-130. Residues Thr-151 and Lys-156 each contribute to the GTP site.

The protein belongs to the GTP cyclohydrolase II family. Zn(2+) serves as cofactor.

It catalyses the reaction GTP + 4 H2O = 2,5-diamino-6-hydroxy-4-(5-phosphoribosylamino)-pyrimidine + formate + 2 phosphate + 3 H(+). The protein operates within cofactor biosynthesis; riboflavin biosynthesis; 5-amino-6-(D-ribitylamino)uracil from GTP: step 1/4. In terms of biological role, catalyzes the conversion of GTP to 2,5-diamino-6-ribosylamino-4(3H)-pyrimidinone 5'-phosphate (DARP), formate and pyrophosphate. This chain is GTP cyclohydrolase-2, found in Vibrio vulnificus (strain CMCP6).